The following is a 138-amino-acid chain: Putative pre-16S rRNA nuclease (138 aa).

This sequence belongs to the YqgF nuclease family.

The protein resides in the cytoplasm. In terms of biological role, could be a nuclease involved in processing of the 5'-end of pre-16S rRNA. This is Putative pre-16S rRNA nuclease from Escherichia coli O7:K1 (strain IAI39 / ExPEC).